The sequence spans 348 residues: Anthranilate phosphoribosyltransferase (348 aa).

Residues Gly91, 94 to 95 (GD), Thr99, 101 to 104 (NIST), 119 to 127 (KHGNRSASG), and Ser131 each bind 5-phospho-alpha-D-ribose 1-diphosphate. Gly91 is a binding site for anthranilate. Ser103 contacts Mg(2+). Asn122 provides a ligand contact to anthranilate. Residue Arg177 coordinates anthranilate. Mg(2+)-binding residues include Asp236 and Glu237.

This sequence belongs to the anthranilate phosphoribosyltransferase family. As to quaternary structure, homodimer. Mg(2+) is required as a cofactor.

It catalyses the reaction N-(5-phospho-beta-D-ribosyl)anthranilate + diphosphate = 5-phospho-alpha-D-ribose 1-diphosphate + anthranilate. The protein operates within amino-acid biosynthesis; L-tryptophan biosynthesis; L-tryptophan from chorismate: step 2/5. Functionally, catalyzes the transfer of the phosphoribosyl group of 5-phosphorylribose-1-pyrophosphate (PRPP) to anthranilate to yield N-(5'-phosphoribosyl)-anthranilate (PRA). The protein is Anthranilate phosphoribosyltransferase of Synechococcus elongatus (strain ATCC 33912 / PCC 7942 / FACHB-805) (Anacystis nidulans R2).